A 628-amino-acid chain; its full sequence is MLAAEKRRLLHKTRPVSASEKPGSIYPQRALYLLVCFSIATISLGYLHFIGAIDIGRFGISSVISDLTKQDAVSEPFSLHKEQTSSVHTESDEQTFELKHIFHHGTGPENYRLHRRLDITPSYLAKHSSYFADFSQRLAQKRDDSSVDSENLEDIYNLMDWPDVHKHKNPFTIQLPIKKDHKKGKVVRLKDRHEPGFLDSYLSYALQVKGDPKILNRIALEWEDEIEIDIPNMKDKDTLVSLATISSNAYVKFPKDENEKNKSDWIDVGQWEPDQENVDLNFGWEDIGLRGHVFVSKDNKTVVIGIKGTSGAGLPGGGSDETAGNDKDNDNLLFSCCCARVGYMWTTVCNCYEKTYTCNQDCLEKELLREDKYYQAVLDLYRNVSAIYPPETTNVWVTGHSLGGALASLLGRTYGLPVVAFEAPGEMLATKRLHLPQPPGIPKFMENIWHVGNTADPIYMGVCNGASSTCNVAGYAMETACHTGYQCVYDVVTDLGWRVNLLNHRIHTVIDDIILAYNDTAQCIEQPPCRDCFNWRFTSHDDDVPDEPEMPNPLRPKPKPKPSSSTSDGKNNRISSTATTTISPTSRKADPTSSDISEPSESPKKCLERTWYGWCSKWGYDGDVDDDQ.

Topologically, residues 1-32 are cytoplasmic; sequence MLAAEKRRLLHKTRPVSASEKPGSIYPQRALY. The chain crosses the membrane as a helical; Signal-anchor for type II membrane protein span at residues 33–53; it reads LLVCFSIATISLGYLHFIGAI. The Lumenal portion of the chain corresponds to 54 to 628; it reads DIGRFGISSV…GYDGDVDDDQ (575 aa). 3 N-linked (GlcNAc...) asparagine glycosylation sites follow: asparagine 261, asparagine 299, and asparagine 383. Serine 401 acts as the Charge relay system in catalysis. Asparagine 518 carries an N-linked (GlcNAc...) asparagine glycan. Residues 540–605 form a disordered region; it reads HDDDVPDEPE…ISEPSESPKK (66 aa). The segment covering 562–586 has biased composition (low complexity); that stretch reads PSSSTSDGKNNRISSTATTTISPTS. Over residues 591–600 the composition is skewed to polar residues; sequence PTSSDISEPS.

Belongs to the AB hydrolase superfamily. Lipase family. In terms of assembly, binds to both phosphatidylinositol (PI) and phosphatidylinositol 3,5-bisphosphate (PIP2).

Its subcellular location is the endosome. It localises to the multivesicular body membrane. It is found in the prevacuolar compartment membrane. It catalyses the reaction a triacylglycerol + H2O = a diacylglycerol + a fatty acid + H(+). Functionally, lipase which is essential for lysis of subvacuolar cytoplasm to vacuole targeted bodies and intravacuolar autophagic bodies. Involved in the lysis of intravacuolar multivesicular body (MVB) vesicles. The intravacuolar membrane disintegration by ATG15 is critical to life span extension. The chain is Putative lipase ATG15 (ATG15) from Scheffersomyces stipitis (strain ATCC 58785 / CBS 6054 / NBRC 10063 / NRRL Y-11545) (Yeast).